Here is a 345-residue protein sequence, read N- to C-terminus: MTDKTSLSYKDAGVDIDAGNALVERIKGVSKRTRRPEVLGGLGGFGALCQIPAGYKEPVLVSGTDGVGTKLRLAIDLKKHDTVGIDLVAMCVNDLIVQGAEPLFFLDYYATGKLDVDTAAAVVTGIGAGCEQSGCALVGGETAEMPGMYEGEDYDIAGFCVGVVEKSEIIDGSKVGEGDALIALAASGPHSNGFSLVRKILEVSKADVQQPLGDTTLANALLEPTRIYVKPVLKLIKECEIHALSHITGGGFWENIPRVLPANTQAVIDEQSWQWPAVFSWLQQAGNVTRHEMYRTFNCGVGMIIALPADQLEKALTLLKTEGENAWHIGYITKAADGEEQVIIQ.

This sequence belongs to the AIR synthase family.

Its subcellular location is the cytoplasm. It carries out the reaction 2-formamido-N(1)-(5-O-phospho-beta-D-ribosyl)acetamidine + ATP = 5-amino-1-(5-phospho-beta-D-ribosyl)imidazole + ADP + phosphate + H(+). Its pathway is purine metabolism; IMP biosynthesis via de novo pathway; 5-amino-1-(5-phospho-D-ribosyl)imidazole from N(2)-formyl-N(1)-(5-phospho-D-ribosyl)glycinamide: step 2/2. The protein is Phosphoribosylformylglycinamidine cyclo-ligase of Aeromonas hydrophila subsp. hydrophila (strain ATCC 7966 / DSM 30187 / BCRC 13018 / CCUG 14551 / JCM 1027 / KCTC 2358 / NCIMB 9240 / NCTC 8049).